A 238-amino-acid polypeptide reads, in one-letter code: MGRKWANIVAKKTAKDGANSKVYAKFGVEIYVAAKKGDPDPETNSALKFVIDRAKQAQVPKHIIDKAIDKAKGNTDETFVEGRYEGFGPNGSMIIVDTLTSNVNRTAANVRSAFGKNGGNMGASGSVSFMFDKKGVVVFAGDDADAIFELLLEADVEVDDVEAEDGTITIIQLQLDLHKAIVALKESGIQEFNVTELEMIPQSEVSLEGDDLATFEKLYDALEDDEDVQKIYTNVDGF.

It belongs to the TACO1 family. YeeN subfamily.

The protein localises to the cytoplasm. This Streptococcus suis (strain 98HAH33) protein is Probable transcriptional regulatory protein SSU98_0387.